The following is a 224-amino-acid chain: Toxin coregulated pilin (224 aa).

A propeptide spans 1–25 (MQLLKQLFKKKFVKEEHDKKTGQEG) (atypical leader sequence). Met26 carries the post-translational modification N-methylmethionine. Residues 26 to 46 (MTLLEVIIVLGIMGVVSAGVV) form a helical membrane-spanning segment. A disulfide bond links Cys145 and Cys211.

Its subcellular location is the fimbrium. It localises to the membrane. Major component of the toxin co-regulated pilus (tcp) which is a type IV pilus essential for bacterial aggregation and subsequent colonization in the host small intestine. This chain is Toxin coregulated pilin (tcpA), found in Vibrio cholerae.